The sequence spans 144 residues: Snaclec 6 (144 aa).

The signal sequence occupies residues 1 to 23; it reads MGRFISVSFGLLVVFLSLSGTGA. 3 disulfides stabilise this stretch: C25/C36, C53/C142, and C119/C134. In terms of domain architecture, C-type lectin spans 32-143; it reads HEGHCYKVFK…CNFIAPVVCK (112 aa).

This sequence belongs to the snaclec family. Heterodimer; disulfide-linked.

The protein resides in the secreted. Its function is as follows. Interferes with one step of hemostasis (modulation of platelet aggregation, or coagulation cascade, for example). The protein is Snaclec 6 of Daboia siamensis (Eastern Russel's viper).